An 81-amino-acid polypeptide reads, in one-letter code: RNA-binding protein KhpA (81 aa).

The region spanning 34–81 (KIALRLSVHKSDTGKVIGKQGRTAKAIRTAVFAAGVQSSKKVQFEIFD) is the KH domain.

This sequence belongs to the KhpA RNA-binding protein family. In terms of assembly, forms a complex with KhpB.

The protein resides in the cytoplasm. Functionally, a probable RNA chaperone. Forms a complex with KhpB which binds to cellular RNA and controls its expression. Plays a role in peptidoglycan (PG) homeostasis and cell length regulation. In Bacillus subtilis (strain 168), this protein is RNA-binding protein KhpA.